The primary structure comprises 343 residues: N-acetyl-gamma-glutamyl-phosphate reductase (343 aa).

Residue C152 is part of the active site.

This sequence belongs to the NAGSA dehydrogenase family. Type 1 subfamily.

The protein resides in the cytoplasm. It carries out the reaction N-acetyl-L-glutamate 5-semialdehyde + phosphate + NADP(+) = N-acetyl-L-glutamyl 5-phosphate + NADPH + H(+). It functions in the pathway amino-acid biosynthesis; L-arginine biosynthesis; N(2)-acetyl-L-ornithine from L-glutamate: step 3/4. Functionally, catalyzes the NADPH-dependent reduction of N-acetyl-5-glutamyl phosphate to yield N-acetyl-L-glutamate 5-semialdehyde. The polypeptide is N-acetyl-gamma-glutamyl-phosphate reductase (Methanopyrus kandleri (strain AV19 / DSM 6324 / JCM 9639 / NBRC 100938)).